We begin with the raw amino-acid sequence, 206 residues long: Max dimerization protein 3 (206 aa).

The segment at 8–25 (IQVLLQAAEFLERREREA) is interaction with SIN3A and SIN3B. Disordered regions lie at residues 29–66 (YASL…NELE) and 122–171 (KLRS…QEDL). The bHLH domain maps to 57–109 (SGRSVHNELEKRRRAQLKRCLEQLRQQMPLGVDCTRYTTLSLLRRARVHIQKL). Low complexity predominate over residues 126–138 (KQQSLQQQLEQLQ). The segment covering 143 to 153 (ARERERLRADS) has biased composition (basic and acidic residues).

Efficient DNA binding requires dimerization with another bHLH protein. Binds DNA as a heterodimer with MAX. Interacts with SIN3A AND SIN3B. Interacts with RNF17. In terms of tissue distribution, expressed only in the proliferating areas of the testis and thymus.

The protein resides in the nucleus. Transcriptional repressor. Binds with MAX to form a sequence-specific DNA-binding protein complex which recognizes the core sequence 5'-CAC[GA]TG-3'. Antagonizes MYC transcriptional activity by competing for MAX and suppresses MYC dependent cell transformation. In Mus musculus (Mouse), this protein is Max dimerization protein 3 (Mxd3).